We begin with the raw amino-acid sequence, 240 residues long: Fibronectin type III domain-containing protein 5 (240 aa).

The span at 1–10 shows a compositional bias: gly residues; it reads MQAARGGAGR. A disordered region spans residues 1–30; the sequence is MQAARGGAGRPGREGRGLERECERSPGVGA. The segment covering 11–24 has biased composition (basic and acidic residues); sequence PGREGRGLERECER. In terms of domain architecture, Fibronectin type-III spans 64–155; the sequence is APVNVTVRHL…EPVLFKTPRE (92 aa). Residues asparagine 67 and asparagine 112 are each glycosylated (N-linked (GlcNAc...) asparagine). Residues 181 to 201 traverse the membrane as a helical segment; that stretch reads GEVLIIVVVLFMWAGVIALFC. Over residues 210–221 the composition is skewed to basic and acidic residues; that stretch reads NEPNNNKEKTKS. The interval 210-240 is disordered; it reads NEPNNNKEKTKSASETSTPEHQGGGLLRSKI. The span at 231-240 shows a compositional bias: gly residues; the sequence is QGGGLLRSKI. A Microbody targeting signal motif is present at residues 238–240; the sequence is SKI.

As to quaternary structure, dimer; may exist in other oligomeric forms. Post-translationally, N-Glycosylated. The extracellular domain is cleaved and released from the cell membrane.

Its subcellular location is the cell membrane. The protein resides in the peroxisome membrane. It is found in the secreted. Mediates beneficial effects of muscular exercise. Induces browning of white adipose tissue by stimulating UCP1 expression, at least in part, via the nuclear receptor PPARA. This chain is Fibronectin type III domain-containing protein 5 (Fndc5), found in Rattus norvegicus (Rat).